The sequence spans 970 residues: Protein translocase subunit SecA (970 aa).

ATP-binding positions include Gln-99, 117–121, and Asp-631; that span reads GEGKT.

It belongs to the SecA family. Monomer and homodimer. Part of the essential Sec protein translocation apparatus which comprises SecA, SecYEG and auxiliary proteins SecDF. Other proteins may also be involved.

The protein resides in the cell inner membrane. It localises to the cytoplasm. It carries out the reaction ATP + H2O + cellular proteinSide 1 = ADP + phosphate + cellular proteinSide 2.. Part of the Sec protein translocase complex. Interacts with the SecYEG preprotein conducting channel. Has a central role in coupling the hydrolysis of ATP to the transfer of proteins into and across the cell membrane, serving as an ATP-driven molecular motor driving the stepwise translocation of polypeptide chains across the membrane. The protein is Protein translocase subunit SecA of Chlamydia caviae (strain ATCC VR-813 / DSM 19441 / 03DC25 / GPIC) (Chlamydophila caviae).